Here is a 572-residue protein sequence, read N- to C-terminus: 2-isopropylmalate synthase (572 aa).

The 275-residue stretch at 31–305 folds into the Pyruvate carboxyltransferase domain; that stretch reads PIWMSTDLRD…DPGLDFSNIN (275 aa). Mg(2+) is bound by residues Asp40, His244, His246, and Asn280. The regulatory domain stretch occupies residues 437 to 572; sequence NTAPIHYVGH…MNDAAESVGV (136 aa).

Belongs to the alpha-IPM synthase/homocitrate synthase family. LeuA type 2 subfamily. As to quaternary structure, homodimer. Requires Mg(2+) as cofactor.

Its subcellular location is the cytoplasm. It catalyses the reaction 3-methyl-2-oxobutanoate + acetyl-CoA + H2O = (2S)-2-isopropylmalate + CoA + H(+). It functions in the pathway amino-acid biosynthesis; L-leucine biosynthesis; L-leucine from 3-methyl-2-oxobutanoate: step 1/4. In terms of biological role, catalyzes the condensation of the acetyl group of acetyl-CoA with 3-methyl-2-oxobutanoate (2-ketoisovalerate) to form 3-carboxy-3-hydroxy-4-methylpentanoate (2-isopropylmalate). The protein is 2-isopropylmalate synthase of Paraburkholderia phytofirmans (strain DSM 17436 / LMG 22146 / PsJN) (Burkholderia phytofirmans).